The chain runs to 95 residues: Aspartyl/glutamyl-tRNA(Asn/Gln) amidotransferase subunit C (95 aa).

The protein belongs to the GatC family. In terms of assembly, heterotrimer of A, B and C subunits.

It carries out the reaction L-glutamyl-tRNA(Gln) + L-glutamine + ATP + H2O = L-glutaminyl-tRNA(Gln) + L-glutamate + ADP + phosphate + H(+). The enzyme catalyses L-aspartyl-tRNA(Asn) + L-glutamine + ATP + H2O = L-asparaginyl-tRNA(Asn) + L-glutamate + ADP + phosphate + 2 H(+). In terms of biological role, allows the formation of correctly charged Asn-tRNA(Asn) or Gln-tRNA(Gln) through the transamidation of misacylated Asp-tRNA(Asn) or Glu-tRNA(Gln) in organisms which lack either or both of asparaginyl-tRNA or glutaminyl-tRNA synthetases. The reaction takes place in the presence of glutamine and ATP through an activated phospho-Asp-tRNA(Asn) or phospho-Glu-tRNA(Gln). This Desulfosudis oleivorans (strain DSM 6200 / JCM 39069 / Hxd3) (Desulfococcus oleovorans) protein is Aspartyl/glutamyl-tRNA(Asn/Gln) amidotransferase subunit C.